The primary structure comprises 129 residues: MAKTPVRARKRVKKQVVDGVAHIHASFNNTIVTITDRQGNALAWATAGGSGFRGSRKSTPFAAQVAAERCAEVVKEFGLKNLEVMVKGPGPGRESTIRALNAAGFRITNITDVTPIPHNGCRPPKKRRV.

The protein belongs to the universal ribosomal protein uS11 family. As to quaternary structure, part of the 30S ribosomal subunit. Interacts with proteins S7 and S18. Binds to IF-3.

Located on the platform of the 30S subunit, it bridges several disparate RNA helices of the 16S rRNA. Forms part of the Shine-Dalgarno cleft in the 70S ribosome. This Pasteurella multocida (strain Pm70) protein is Small ribosomal subunit protein uS11.